Here is a 367-residue protein sequence, read N- to C-terminus: tRNA 2-selenouridine synthase (367 aa).

A Rhodanese domain is found at 14–137 (FLNDVPLMDV…LRRFLIDSLE (124 aa)). The S-selanylcysteine intermediate role is filled by C97.

The protein belongs to the SelU family. Monomer.

The enzyme catalyses 5-methylaminomethyl-2-thiouridine(34) in tRNA + selenophosphate + (2E)-geranyl diphosphate + H2O + H(+) = 5-methylaminomethyl-2-selenouridine(34) in tRNA + (2E)-thiogeraniol + phosphate + diphosphate. It catalyses the reaction 5-methylaminomethyl-2-thiouridine(34) in tRNA + (2E)-geranyl diphosphate = 5-methylaminomethyl-S-(2E)-geranyl-thiouridine(34) in tRNA + diphosphate. It carries out the reaction 5-methylaminomethyl-S-(2E)-geranyl-thiouridine(34) in tRNA + selenophosphate + H(+) = 5-methylaminomethyl-2-(Se-phospho)selenouridine(34) in tRNA + (2E)-thiogeraniol. The catalysed reaction is 5-methylaminomethyl-2-(Se-phospho)selenouridine(34) in tRNA + H2O = 5-methylaminomethyl-2-selenouridine(34) in tRNA + phosphate. Its function is as follows. Involved in the post-transcriptional modification of the uridine at the wobble position (U34) of tRNA(Lys), tRNA(Glu) and tRNA(Gln). Catalyzes the conversion of 2-thiouridine (S2U-RNA) to 2-selenouridine (Se2U-RNA). Acts in a two-step process involving geranylation of 2-thiouridine (S2U) to S-geranyl-2-thiouridine (geS2U) and subsequent selenation of the latter derivative to 2-selenouridine (Se2U) in the tRNA chain. The polypeptide is tRNA 2-selenouridine synthase (Marinobacter nauticus (strain ATCC 700491 / DSM 11845 / VT8) (Marinobacter aquaeolei)).